The following is a 322-amino-acid chain: Cytochrome c biogenesis protein CcsA (322 aa).

8 helical membrane-spanning segments follow: residues 9–29 (ILTHISFSIVSIVITLHLITL), 44–64 (GMIATFLCLTGLLTTRWIYSG), 71–91 (LYESLIFLSWSFSLIHIVPYF), 98–118 (LTTITASITIFTQGFATSGLL), 143–163 (MILSYAALLCGSLLSVALLVI), 226–246 (VISLGFIFLTIGILSGAVWAN), 253–273 (WSWDPKETWAFITWIVFAIYL), and 287–307 (AIVATLGFLIIWICYFGVNLL).

Belongs to the CcmF/CycK/Ccl1/NrfE/CcsA family. As to quaternary structure, may interact with Ccs1.

The protein resides in the plastid. Its subcellular location is the chloroplast thylakoid membrane. Required during biogenesis of c-type cytochromes (cytochrome c6 and cytochrome f) at the step of heme attachment. In Helianthus annuus (Common sunflower), this protein is Cytochrome c biogenesis protein CcsA.